The primary structure comprises 317 residues: Movement protein (317 aa).

The disordered stretch occupies residues 223–317 (ETGSIRGIAP…RVTDPNPERL (95 aa)). The span at 255-276 (SKTTKLPSLEPSSGSSSGLSMS) shows a compositional bias: low complexity. Over residues 302–317 (HLSDKGRVTDPNPERL) the composition is skewed to basic and acidic residues.

As to quaternary structure, interacts with host glyceraldehyde 3-phosphate dehydrogenase-A/NbGAPDH-A; this interaction plays a positive role in cell-to-cell movement of the virus.

The protein resides in the host cell wall. Its subcellular location is the host endoplasmic reticulum membrane. Functionally, plays an essential role in cell-to-cell movement and long-distance transport of the viral genome. Mechanistically, movement protein is recruited by viral replicase complexes formed on RNA1 to punctate structures on the host cortical endoplasmic reticulum. In turn, interacts with the viral genome and mediates virion movement from cell to cell. Also acts as a suppressor of RNA-mediated gene silencing, also known as post-transcriptional gene silencing (PTGS), a mechanism of plant viral defense that limits the accumulation of viral RNAs. This is Movement protein from Red clover necrotic mosaic virus (RCNMV).